A 191-amino-acid chain; its full sequence is Protein Ves (191 aa).

It belongs to the Ves family.

This chain is Protein Ves, found in Citrobacter koseri (strain ATCC BAA-895 / CDC 4225-83 / SGSC4696).